The following is an 85-amino-acid chain: MASFKIVIVCLALLVAVASARRRDMMSDDELDYHYSKRGIPCACDSDGPDIRSASLSGIVWMGSCPSGWKKCKSYYSIVADCCNQ.

Residues 1–20 (MASFKIVIVCLALLVAVASA) form the signal peptide. A propeptide spanning residues 21–36 (RRRDMMSDDELDYHYS) is cleaved from the precursor. 3 cysteine pairs are disulfide-bonded: Cys-42/Cys-82, Cys-44/Cys-72, and Cys-65/Cys-83.

It belongs to the sea anemone sodium channel inhibitory toxin family. Type II subfamily. Expressed in ectodermal glands and in clumps outside of the extodermal layer. Is not expressed in nematocytes. In adult female tissues, shows similar expression levels in mesenteries (gametes-producing tissue), tentacles, pharynx and physa.

It is found in the secreted. Binds to site 3 of voltage-gated sodium channels and inhibits the inactivation process. Is highly active on DmNav1/TipE (drosophila) and is only extremely weakly active on rat Nav1.4-beta-1/SCN4A-SCN1B, and on human Nav1.5-beta-1/SCN5A-beta-1. This reveals high specificity for arthropod over mammalian channels. In vivo, when released into the medium, this recombinant toxin induces impaired swimming, paralysis and death of the crustacean A.nauplii within several hours. Also causes paralysis of cherry shrimps immediately after injection at very low doses. Its effect on zebrafish (D.rerio) larvae is also rapid, since it induces tail twitching accompanied by impaired swimming after 20 minutes and complete paralysis within 45 minutes. It has also been observed to cause death of zebrafish larvae within 1 hour. The sequence is that of N.vectensis toxin 1 4 from Nematostella vectensis (Starlet sea anemone).